We begin with the raw amino-acid sequence, 259 residues long: Global transcriptional regulator CodY (259 aa).

Positions M1–L155 are GAF domain. Positions A203–R222 form a DNA-binding region, H-T-H motif. S215 is modified (phosphoserine).

Belongs to the CodY family.

It is found in the cytoplasm. Functionally, DNA-binding global transcriptional regulator which is involved in the adaptive response to starvation and acts by directly or indirectly controlling the expression of numerous genes in response to nutrient availability. During rapid exponential growth, CodY is highly active and represses genes whose products allow adaptation to nutrient depletion. The sequence is that of Global transcriptional regulator CodY from Bacillus cytotoxicus (strain DSM 22905 / CIP 110041 / 391-98 / NVH 391-98).